Consider the following 112-residue polypeptide: Large ribosomal subunit protein uL22 (112 aa).

This sequence belongs to the universal ribosomal protein uL22 family. As to quaternary structure, part of the 50S ribosomal subunit.

Its function is as follows. This protein binds specifically to 23S rRNA; its binding is stimulated by other ribosomal proteins, e.g. L4, L17, and L20. It is important during the early stages of 50S assembly. It makes multiple contacts with different domains of the 23S rRNA in the assembled 50S subunit and ribosome. In terms of biological role, the globular domain of the protein is located near the polypeptide exit tunnel on the outside of the subunit, while an extended beta-hairpin is found that lines the wall of the exit tunnel in the center of the 70S ribosome. This chain is Large ribosomal subunit protein uL22, found in Legionella pneumophila subsp. pneumophila (strain Philadelphia 1 / ATCC 33152 / DSM 7513).